The following is a 528-amino-acid chain: Nucleoporin ASM4 (528 aa).

One copy of the FG 1 repeat lies at 2 to 3; it reads FG. The span at 23-50 shows a compositional bias: low complexity; the sequence is TTQMFQSQSQLQPQPQPQPQQQQQHLQF. Disordered regions lie at residues 23–64 and 88–144; these read TTQM…FGNS and IKNG…SMNA. Composition is skewed to polar residues over residues 51-64 and 97-108; these read NGSSDASSLRFGNS and QHGQGNNPSWVN. The FG 2 repeat unit spans residues 61–62; the sequence is FG. A compositionally biased stretch (basic residues) spans 110-125; the sequence is PKKRFTPHTVIRRKTT. Low complexity predominate over residues 127–141; sequence QNSSSDINQNDDSSS. FG repeat units lie at residues 195 to 196, 274 to 275, and 291 to 292; these read FG. The RRM Nup35-type domain occupies 265–394; it reads SSSLSAIIVF…IPYSKNAVEQ (130 aa). Phosphoserine is present on residues serine 458 and serine 464. A coiled-coil region spans residues 490–510; that stretch reads NLLRNLESKMRQQEAKYRNNE. The stretch at 523–524 is one FG 6 repeat; that stretch reads FG.

Component of the nuclear pore complex (NPC). NPC constitutes the exclusive means of nucleocytoplasmic transport. NPCs allow the passive diffusion of ions and small molecules and the active, nuclear transport receptor-mediated bidirectional transport of macromolecules such as proteins, RNAs, ribonucleoparticles (RNPs), and ribosomal subunits across the nuclear envelope. Due to its 8-fold rotational symmetry, all subunits are present with 8 copies or multiples thereof. ASM4 may form a subcomplex with NUP53, NDC1, and NUP170. Phosphorylated by CDC28.

The protein resides in the nucleus. Its subcellular location is the nuclear pore complex. The protein localises to the nucleus membrane. In terms of biological role, functions as a component of the nuclear pore complex (NPC). NPC components, collectively referred to as nucleoporins (NUPs), can play the role of both NPC structural components and of docking or interaction partners for transiently associated nuclear transport factors. Active directional transport is assured by both, a Phe-Gly (FG) repeat affinity gradient for these transport factors across the NPC and a transport cofactor concentration gradient across the nuclear envelope (GSP1 and GSP2 GTPases associated predominantly with GTP in the nucleus, with GDP in the cytoplasm). May have a mitosis control function. The chain is Nucleoporin ASM4 (ASM4) from Saccharomyces cerevisiae (strain ATCC 204508 / S288c) (Baker's yeast).